The primary structure comprises 353 residues: N-formyl peptide receptor 3 (353 aa).

Topologically, residues 1–27 are extracellular; it reads METNFSIPLNETEEVLPEPAGHTVLWI. 2 N-linked (GlcNAc...) asparagine glycosylation sites follow: N4 and N10. Residues 28–50 traverse the membrane as a helical segment; the sequence is FSLLVHGVTFVFGVLGNGLVIWV. Residues 51 to 61 are Cytoplasmic-facing; that stretch reads AGFRMTRTVNT. The chain crosses the membrane as a helical span at residues 62 to 83; the sequence is ICYLNLALADFSFSAILPFRMV. Residues 84 to 100 lie on the Extracellular side of the membrane; it reads SVAMREKWPFGSFLCKL. C98 and C176 form a disulfide bridge. A helical transmembrane segment spans residues 101 to 121; it reads VHVMIDINLFVSVYLITIIAL. The Cytoplasmic segment spans residues 122 to 140; that stretch reads DRCICVLHPAWAQNHRTMS. A helical membrane pass occupies residues 141 to 162; that stretch reads LAKRVMTGLWIFTIVLTLPNFI. Over 163 to 205 the chain is Extracellular; it reads FWTTISTTNGDTYCIFNFAFWGDTAVERLNVFITMAKVFLILH. A helical transmembrane segment spans residues 206-226; the sequence is FIIGFSVPMSIITVCYGIIAA. The Cytoplasmic segment spans residues 227 to 242; the sequence is KIHRNHMIKSSRPLRV. Residues 243-266 form a helical membrane-spanning segment; sequence FAAVVASFFICWFPYELIGILMAV. Topologically, residues 267-286 are extracellular; it reads WLKEMLLNGKYKIILVLINP. The chain crosses the membrane as a helical span at residues 287-306; it reads TSSLAFFNSCLNPILYVFMG. Residues 307–353 are Cytoplasmic-facing; the sequence is RNFQERLIRSLPTSLERALTEVPDSAQTSNTDTTSASPPEETELQAM. The tract at residues 327 to 353 is disordered; it reads EVPDSAQTSNTDTTSASPPEETELQAM. A compositionally biased stretch (polar residues) spans 331–343; sequence SAQTSNTDTTSAS.

The protein belongs to the G-protein coupled receptor 1 family. Detected in various tissues with highest expression in lung.

It localises to the cell membrane. In terms of biological role, low affinity receptor for N-formyl-methionyl peptides, which are powerful neutrophils chemotactic factors. Binding of FMLP to the receptor causes activation of neutrophils. This response is mediated via a G-protein that activates a phosphatidylinositol-calcium second messenger system. Acts as a receptor for humanin. This chain is N-formyl peptide receptor 3 (FPR3), found in Homo sapiens (Human).